Here is a 303-residue protein sequence, read N- to C-terminus: Uricase (303 aa).

Alanine 2 bears the N-acetylalanine mark. N6-acetyllysine; alternate is present on residues lysine 10 and lysine 23. N6-succinyllysine; alternate occurs at positions 10 and 23. The active-site Charge relay system is the lysine 23. N6-acetyllysine is present on residues lysine 27 and lysine 36. Phosphoserine occurs at positions 39 and 63. Threonine 68 (charge relay system) is an active-site residue. Positions 68 and 69 each coordinate urate. Lysine 118, lysine 122, and lysine 164 each carry N6-acetyllysine. Phenylalanine 170 provides a ligand contact to urate. N6-acetyllysine is present on residues lysine 175 and lysine 185. Position 187 (arginine 187) interacts with urate. N6-acetyllysine; alternate is present on lysine 220. Lysine 220 carries the post-translational modification N6-succinyllysine; alternate. Position 231 is a phosphoserine (serine 231). Residues valine 234, glutamine 235, and asparagine 261 each coordinate urate. Histidine 263 (charge relay system) is an active-site residue. Lysine 277 is modified (N6-acetyllysine). Tyrosine 288 is modified (phosphotyrosine). Residues 301–303 (SRL) carry the Microbody targeting signal motif.

It belongs to the uricase family. As to expression, expressed in liver. Not detected in other tissues tested.

It localises to the peroxisome. The catalysed reaction is urate + O2 + H2O = 5-hydroxyisourate + H2O2. Its pathway is purine metabolism; urate degradation; (S)-allantoin from urate: step 1/3. Competitively inhibited by xanthine. Catalyzes the oxidation of uric acid to 5-hydroxyisourate, which is further processed to form (S)-allantoin. The sequence is that of Uricase (Uox) from Rattus norvegicus (Rat).